Consider the following 157-residue polypeptide: Small ribosomal subunit protein uS7 (157 aa).

Belongs to the universal ribosomal protein uS7 family. In terms of assembly, part of the 30S ribosomal subunit. Contacts proteins S9 and S11.

In terms of biological role, one of the primary rRNA binding proteins, it binds directly to 16S rRNA where it nucleates assembly of the head domain of the 30S subunit. Is located at the subunit interface close to the decoding center, probably blocks exit of the E-site tRNA. This is Small ribosomal subunit protein uS7 from Stenotrophomonas maltophilia (strain R551-3).